Here is a 557-residue protein sequence, read N- to C-terminus: 2-succinyl-5-enolpyruvyl-6-hydroxy-3-cyclohexene-1-carboxylate synthase (557 aa).

This sequence belongs to the TPP enzyme family. MenD subfamily. Homodimer. The cofactor is Mg(2+). Mn(2+) serves as cofactor. Thiamine diphosphate is required as a cofactor.

The enzyme catalyses isochorismate + 2-oxoglutarate + H(+) = 5-enolpyruvoyl-6-hydroxy-2-succinyl-cyclohex-3-ene-1-carboxylate + CO2. Its pathway is quinol/quinone metabolism; 1,4-dihydroxy-2-naphthoate biosynthesis; 1,4-dihydroxy-2-naphthoate from chorismate: step 2/7. It functions in the pathway quinol/quinone metabolism; menaquinone biosynthesis. Catalyzes the thiamine diphosphate-dependent decarboxylation of 2-oxoglutarate and the subsequent addition of the resulting succinic semialdehyde-thiamine pyrophosphate anion to isochorismate to yield 2-succinyl-5-enolpyruvyl-6-hydroxy-3-cyclohexene-1-carboxylate (SEPHCHC). This is 2-succinyl-5-enolpyruvyl-6-hydroxy-3-cyclohexene-1-carboxylate synthase from Staphylococcus aureus (strain MSSA476).